A 282-amino-acid polypeptide reads, in one-letter code: Elongation factor Ts (282 aa).

The interval 79–82 (TDFV) is involved in Mg(2+) ion dislocation from EF-Tu.

Belongs to the EF-Ts family.

It localises to the cytoplasm. In terms of biological role, associates with the EF-Tu.GDP complex and induces the exchange of GDP to GTP. It remains bound to the aminoacyl-tRNA.EF-Tu.GTP complex up to the GTP hydrolysis stage on the ribosome. This chain is Elongation factor Ts, found in Shewanella sediminis (strain HAW-EB3).